The following is a 373-amino-acid chain: Phosphoserine aminotransferase (373 aa).

Residue R46 participates in L-glutamate binding. Residues F104, T150, D172, and Q195 each coordinate pyridoxal 5'-phosphate. K196 bears the N6-(pyridoxal phosphate)lysine mark. Position 247–248 (247–248 (NT)) interacts with pyridoxal 5'-phosphate.

Belongs to the class-V pyridoxal-phosphate-dependent aminotransferase family. SerC subfamily. As to quaternary structure, homodimer. The cofactor is pyridoxal 5'-phosphate.

It is found in the cytoplasm. The catalysed reaction is O-phospho-L-serine + 2-oxoglutarate = 3-phosphooxypyruvate + L-glutamate. The enzyme catalyses 4-(phosphooxy)-L-threonine + 2-oxoglutarate = (R)-3-hydroxy-2-oxo-4-phosphooxybutanoate + L-glutamate. It participates in amino-acid biosynthesis; L-serine biosynthesis; L-serine from 3-phospho-D-glycerate: step 2/3. Its pathway is cofactor biosynthesis; pyridoxine 5'-phosphate biosynthesis; pyridoxine 5'-phosphate from D-erythrose 4-phosphate: step 3/5. Catalyzes the reversible conversion of 3-phosphohydroxypyruvate to phosphoserine and of 3-hydroxy-2-oxo-4-phosphonooxybutanoate to phosphohydroxythreonine. The chain is Phosphoserine aminotransferase from Rhodococcus jostii (strain RHA1).